Here is a 294-residue protein sequence, read N- to C-terminus: Cholera toxin transcriptional activator (294 aa).

Residues Met1–Arg182 lie on the Cytoplasmic side of the membrane. Residues Thr18–Ala121 constitute a DNA-binding region (ompR/PhoB-type). A helical transmembrane segment spans residues Leu183–Leu198. Over Thr199–Glu294 the chain is Periplasmic.

It is found in the cell membrane. This transcription activator controls cholera toxin, pilus colonization factor and outer membrane protein expression in V.cholerae. It binds to the 5'-TTTTGAT-3' tandemly repeated DNA sequence in the cholera toxin promoter region. ToxS interacts with the C-terminal periplasmic domain of ToxR, stimulating its activity. It activates transcription at the promoters for tcpI and tcpA and this is presumably via ToxT. This chain is Cholera toxin transcriptional activator (toxR), found in Vibrio cholerae serotype O1 (strain ATCC 39315 / El Tor Inaba N16961).